The chain runs to 204 residues: 3-isopropylmalate dehydratase small subunit (204 aa).

Belongs to the LeuD family. LeuD type 1 subfamily. Heterodimer of LeuC and LeuD.

The enzyme catalyses (2R,3S)-3-isopropylmalate = (2S)-2-isopropylmalate. It participates in amino-acid biosynthesis; L-leucine biosynthesis; L-leucine from 3-methyl-2-oxobutanoate: step 2/4. Catalyzes the isomerization between 2-isopropylmalate and 3-isopropylmalate, via the formation of 2-isopropylmaleate. This is 3-isopropylmalate dehydratase small subunit from Chloroflexus aggregans (strain MD-66 / DSM 9485).